A 175-amino-acid polypeptide reads, in one-letter code: Transcriptional repressor NrdR (175 aa).

The segment at 3–34 (CPICQDTNSRVLESRSAESGKSIRRRRECMNC) is a zinc-finger region. Residues 49–139 (ITIIKRDGKK…VYRKFQGIRD (91 aa)) form the ATP-cone domain.

The protein belongs to the NrdR family. Zn(2+) is required as a cofactor.

Functionally, negatively regulates transcription of bacterial ribonucleotide reductase nrd genes and operons by binding to NrdR-boxes. The chain is Transcriptional repressor NrdR from Trichodesmium erythraeum (strain IMS101).